The following is a 382-amino-acid chain: UDP-4-amino-4-deoxy-L-arabinose--oxoglutarate aminotransferase (382 aa).

The residue at position 183 (Lys183) is an N6-(pyridoxal phosphate)lysine.

The protein belongs to the DegT/DnrJ/EryC1 family. ArnB subfamily. In terms of assembly, homodimer. Pyridoxal 5'-phosphate serves as cofactor.

It catalyses the reaction UDP-4-amino-4-deoxy-beta-L-arabinose + 2-oxoglutarate = UDP-beta-L-threo-pentopyranos-4-ulose + L-glutamate. The protein operates within nucleotide-sugar biosynthesis; UDP-4-deoxy-4-formamido-beta-L-arabinose biosynthesis; UDP-4-deoxy-4-formamido-beta-L-arabinose from UDP-alpha-D-glucuronate: step 2/3. It functions in the pathway bacterial outer membrane biogenesis; lipopolysaccharide biosynthesis. In terms of biological role, catalyzes the conversion of UDP-4-keto-arabinose (UDP-Ara4O) to UDP-4-amino-4-deoxy-L-arabinose (UDP-L-Ara4N). The modified arabinose is attached to lipid A and is required for resistance to polymyxin and cationic antimicrobial peptides. The polypeptide is UDP-4-amino-4-deoxy-L-arabinose--oxoglutarate aminotransferase (Pseudomonas fluorescens (strain Pf0-1)).